The sequence spans 251 residues: Triosephosphate isomerase (251 aa).

A substrate-binding site is contributed by 9 to 11; it reads NWK. The active-site Electrophile is His-94. Glu-166 (proton acceptor) is an active-site residue. Substrate is bound by residues Gly-172, Ser-211, and 232–233; that span reads GG.

It belongs to the triosephosphate isomerase family. Homodimer.

The protein localises to the cytoplasm. The enzyme catalyses D-glyceraldehyde 3-phosphate = dihydroxyacetone phosphate. The protein operates within carbohydrate biosynthesis; gluconeogenesis. It functions in the pathway carbohydrate degradation; glycolysis; D-glyceraldehyde 3-phosphate from glycerone phosphate: step 1/1. In terms of biological role, involved in the gluconeogenesis. Catalyzes stereospecifically the conversion of dihydroxyacetone phosphate (DHAP) to D-glyceraldehyde-3-phosphate (G3P). This chain is Triosephosphate isomerase, found in Xanthomonas oryzae pv. oryzae (strain MAFF 311018).